Reading from the N-terminus, the 279-residue chain is uncharacterized protein (279 aa).

Transmembrane regions (helical) follow at residues 1 to 21 (MGFI…LCGI), 38 to 58 (FACH…SVVA), and 131 to 151 (SLRY…VFID).

It belongs to the 1-acyl-sn-glycerol-3-phosphate acyltransferase family.

The protein localises to the endoplasmic reticulum membrane. This is an uncharacterized protein from Schizosaccharomyces pombe (strain 972 / ATCC 24843) (Fission yeast).